The primary structure comprises 223 residues: DNA mismatch repair protein MutH (223 aa).

This sequence belongs to the MutH family.

It is found in the cytoplasm. In terms of biological role, sequence-specific endonuclease that cleaves unmethylated GATC sequences. It is involved in DNA mismatch repair. This Haemophilus influenzae (strain PittEE) protein is DNA mismatch repair protein MutH.